An 860-amino-acid polypeptide reads, in one-letter code: Leucine--tRNA ligase (860 aa).

The 'HIGH' region signature appears at 73–83 (VLQPIGWDAFG). The 'KMSKS' region motif lies at 650–654 (SPADM). Residue D653 participates in ATP binding.

This sequence belongs to the class-I aminoacyl-tRNA synthetase family.

The protein localises to the cytoplasm. It carries out the reaction tRNA(Leu) + L-leucine + ATP = L-leucyl-tRNA(Leu) + AMP + diphosphate. The sequence is that of Leucine--tRNA ligase from Shigella flexneri.